The following is a 202-amino-acid chain: PITH domain-containing protein 1 (202 aa).

The 174-residue stretch at 11–184 (SHGVDDGIEY…IVNTVYESKP (174 aa)) folds into the PITH domain.

It belongs to the PITHD1 family.

This Dictyostelium discoideum (Social amoeba) protein is PITH domain-containing protein 1.